Consider the following 96-residue polypeptide: ESAT-6-like protein SAG1039 (96 aa).

Belongs to the WXG100 family. sagEsxA-like subfamily. Homodimer.

The protein is ESAT-6-like protein SAG1039 of Streptococcus agalactiae serotype V (strain ATCC BAA-611 / 2603 V/R).